Reading from the N-terminus, the 506-residue chain is Histidine ammonia-lyase (506 aa).

A cross-link (5-imidazolinone (Ala-Gly)) is located at residues 143 to 145 (ASG). S144 is modified (2,3-didehydroalanine (Ser)).

Belongs to the PAL/histidase family. Post-translationally, contains an active site 4-methylidene-imidazol-5-one (MIO), which is formed autocatalytically by cyclization and dehydration of residues Ala-Ser-Gly.

It localises to the cytoplasm. It carries out the reaction L-histidine = trans-urocanate + NH4(+). Its pathway is amino-acid degradation; L-histidine degradation into L-glutamate; N-formimidoyl-L-glutamate from L-histidine: step 1/3. In Citrobacter koseri (strain ATCC BAA-895 / CDC 4225-83 / SGSC4696), this protein is Histidine ammonia-lyase.